The following is a 324-amino-acid chain: Probable UDP-sugar transporter protein SLC35A4 (324 aa).

The Cytoplasmic portion of the chain corresponds to 1–18; that stretch reads MSVEDGGVPGLGRPRKAR. A helical transmembrane segment spans residues 19-39; the sequence is WTLMLLLSTAMYGAHAPLLAL. Topologically, residues 40–52 are lumenal; sequence CHVDGRVPFRPSS. Residues 53–73 traverse the membrane as a helical segment; sequence AVLLTELTKLLLCALSLLVGW. Topologically, residues 74–85 are cytoplasmic; that stretch reads QAWPQGTPPWRQ. Residues 86–106 traverse the membrane as a helical segment; the sequence is AAPFALSALLYGANNNLVIYL. At 107-141 the chain is on the lumenal side; sequence QRYMDPSTYQVLSNLKIGSTALFYCLCLRHRLSAR. A helical membrane pass occupies residues 142–162; that stretch reads QGLALLLLMAAGACYAAGGLQ. Residues 163–180 are Cytoplasmic-facing; it reads DPGTTLPGPPSAAATSPM. The chain crosses the membrane as a helical span at residues 181–201; it reads PLHITPLGLLLLILYCLISGL. The Lumenal segment spans residues 202-214; the sequence is SSVYTELLMKRQR. Residues 215–235 traverse the membrane as a helical segment; the sequence is LPLALQNLFLYSFGVLLNLGL. Residues 236 to 248 lie on the Cytoplasmic side of the membrane; the sequence is HAGGGPGPGLLEG. A helical membrane pass occupies residues 249–271; sequence FSGWMALVVLSQALNGLLMSAVM. The Lumenal segment spans residues 272–275; the sequence is KHGS. A helical membrane pass occupies residues 276-298; that stretch reads SITRLFVVSCSLVVNAVLSAALL. The Cytoplasmic portion of the chain corresponds to 299 to 324; it reads RLQLTAAFFLATLLIGLAVRLYYGSR.

This sequence belongs to the nucleotide-sugar transporter family. SLC35A subfamily. In terms of assembly, found in a complex with SLC35A2 and SLC35A3.

It localises to the golgi apparatus membrane. It carries out the reaction CDP-L-ribitol(in) + CDP(out) = CDP-L-ribitol(out) + CDP(in). In terms of biological role, mediates the transport of CDP-ribitol. Does not exhibit CMP-sialic acid, UDP-galactose and UDP-N-acetylglucosamine transport activity. The sequence is that of Probable UDP-sugar transporter protein SLC35A4 from Bos taurus (Bovine).